The primary structure comprises 591 residues: Cineole synthase 1, chloroplastic (591 aa).

Residues 1 to 44 (MSSLIMQVVIPKPAKFFHNNLFSLSSKRHRFSTTTTTRGGRWAR) constitute a chloroplast transit peptide. Arginine 308, aspartate 345, aspartate 349, arginine 486, and aspartate 489 together coordinate (2E)-geranyl diphosphate. The Mg(2+) site is built by aspartate 345 and aspartate 349. Positions 345–349 (DDVFD) match the DDXXD motif motif. Mg(2+)-binding residues include aspartate 489, threonine 493, and glutamate 497.

The protein belongs to the terpene synthase family. Tpsb subfamily. In terms of assembly, monomer. It depends on Mg(2+) as a cofactor. Requires Mn(2+) as cofactor.

The protein resides in the plastid. It is found in the chloroplast. It carries out the reaction (2E)-geranyl diphosphate + H2O = 1,8-cineole + diphosphate. It catalyses the reaction (2E)-geranyl diphosphate = alpha-pinene + diphosphate. The enzyme catalyses (2E)-geranyl diphosphate = beta-pinene + diphosphate. The catalysed reaction is (2E)-geranyl diphosphate + H2O = (S)-alpha-terpineol + diphosphate. It carries out the reaction (2E)-geranyl diphosphate = beta-myrcene + diphosphate. It catalyses the reaction (2E)-geranyl diphosphate = sabinene + diphosphate. It participates in secondary metabolite biosynthesis; terpenoid biosynthesis. In terms of biological role, monoterpene synthase (TPS) involved in the biosynthesis of monoterpene natural products, components of the chemical defense arsenal. Catalyzes the conversion of (2E)-geranyl diphosphate (GPP) into 1,8-cineole, and, as minor products, alpha-terpineol, beta-pinene, alpha-pinene, sabinene and myrcene. The chain is Cineole synthase 1, chloroplastic from Salvia fruticosa (Greek sage).